We begin with the raw amino-acid sequence, 402 residues long: MATQASVEWIFNIAGSAASASIAKAIKDAGGSEDFAKYVIARFYDNYKDSVDDTGVYNACIGRARTVDKALDDSRKAERNEDWHTNLETISRLDLELAELKLILSNLGIKREDRVLNSMFSVVREEGKSSNTVMLKQNAVRMIEEGKLKIRVERNENYTASLKNKIEELECMIDAFEKGKEIIISLDAMNGEVKRDGNSCSYNSTAAFVSTIVGNPIKMYDESGKPLFDVGDYLNPKHIIDKMIENEIPIFKSDYRNNESPDFDVWNERSNLKIVSINDCHAICVFKFENAWWCFDDGVLNKYSGNGNPLIVANAKFQIDKILISGDVELNPGPDPLIRLNDCKTKYGIDIICRFYIVLDNDGSIIHMCYMRTGSAEAVAKGRSKKEAKRIAAKDILDQIGL.

The DRBM domain occupies 334 to 402; it reads PDPLIRLNDC…AKDILDQIGL (69 aa).

Belongs to the rotavirus NSP3 family.

The protein resides in the host cytoplasm. May play a role in stimulating the translation of viral mRNAs. In Sus scrofa (Pig), this protein is Non-structural protein 3.